The following is a 313-amino-acid chain: MAETFKHTTVLLDEAVNGLNIRSNGIYIDGTFGRGGHSRLILSHLGTDGQLLAIDRDPQAVSAASAIHDARFSIIHGPFSSLADYVAERGLVGRIDGILLDLGVSSPQLDDPERGFSFMRDGPLDMRMDPSRGVSAAEWLMNAEADDIAWVLKTFGEERFAKRIARAIVERNRVEPLTRTKALAELIAAACPIREKHKHPATRSFQAIRIYINSELDEIERALEGALQVLAPHGRLSVISFHSLEDRIVKRFIRQHSRGPQVPAGLPLTEAQLKSQGGRTLKAVGKMMPSESEVGENPRARSSVLRFAERLPA.

Residues 35-37 (GGH), Asp55, Phe79, Asp101, and Gln108 contribute to the S-adenosyl-L-methionine site.

It belongs to the methyltransferase superfamily. RsmH family.

It is found in the cytoplasm. The catalysed reaction is cytidine(1402) in 16S rRNA + S-adenosyl-L-methionine = N(4)-methylcytidine(1402) in 16S rRNA + S-adenosyl-L-homocysteine + H(+). Its function is as follows. Specifically methylates the N4 position of cytidine in position 1402 (C1402) of 16S rRNA. In Musicola paradisiaca (strain Ech703) (Dickeya paradisiaca), this protein is Ribosomal RNA small subunit methyltransferase H.